The primary structure comprises 72 residues: Translation initiation factor IF-1 (72 aa).

In terms of domain architecture, S1-like spans 1–72; that stretch reads MAKKDVIELE…TRGRITWRKK (72 aa).

The protein belongs to the IF-1 family. In terms of assembly, component of the 30S ribosomal translation pre-initiation complex which assembles on the 30S ribosome in the order IF-2 and IF-3, IF-1 and N-formylmethionyl-tRNA(fMet); mRNA recruitment can occur at any time during PIC assembly.

The protein localises to the cytoplasm. In terms of biological role, one of the essential components for the initiation of protein synthesis. Stabilizes the binding of IF-2 and IF-3 on the 30S subunit to which N-formylmethionyl-tRNA(fMet) subsequently binds. Helps modulate mRNA selection, yielding the 30S pre-initiation complex (PIC). Upon addition of the 50S ribosomal subunit IF-1, IF-2 and IF-3 are released leaving the mature 70S translation initiation complex. The protein is Translation initiation factor IF-1 of Clostridioides difficile (strain 630) (Peptoclostridium difficile).